Here is a 97-residue protein sequence, read N- to C-terminus: Large ribosomal subunit protein uL23 (97 aa).

This sequence belongs to the universal ribosomal protein uL23 family. As to quaternary structure, part of the 50S ribosomal subunit. Contacts protein L29, and trigger factor when it is bound to the ribosome.

In terms of biological role, one of the early assembly proteins it binds 23S rRNA. One of the proteins that surrounds the polypeptide exit tunnel on the outside of the ribosome. Forms the main docking site for trigger factor binding to the ribosome. The polypeptide is Large ribosomal subunit protein uL23 (Sulfurihydrogenibium sp. (strain YO3AOP1)).